Here is a 442-residue protein sequence, read N- to C-terminus: UDP-N-acetylmuramate--L-alanine ligase (442 aa).

Position 109–115 (109–115 (GAHGKTS)) interacts with ATP.

The protein belongs to the MurCDEF family.

The protein localises to the cytoplasm. It catalyses the reaction UDP-N-acetyl-alpha-D-muramate + L-alanine + ATP = UDP-N-acetyl-alpha-D-muramoyl-L-alanine + ADP + phosphate + H(+). It functions in the pathway cell wall biogenesis; peptidoglycan biosynthesis. Its function is as follows. Cell wall formation. The protein is UDP-N-acetylmuramate--L-alanine ligase of Streptococcus pyogenes serotype M3 (strain SSI-1).